A 120-amino-acid polypeptide reads, in one-letter code: uncharacterized protein (120 aa).

A helical membrane pass occupies residues 40-62 (SFLTDALLNLIYILFFSSSVFNW).

It is found in the membrane. This is an uncharacterized protein from Saccharomyces cerevisiae (strain ATCC 204508 / S288c) (Baker's yeast).